A 305-amino-acid chain; its full sequence is Maximins-S type B/C (305 aa).

The signal sequence occupies residues 1 to 18; sequence MNFNYFILVLFFITSGHA. 2 propeptides span residues 19–35 and 52–65; these read KSET…HIKR and SAEE…LVTR. Asn-83 carries the asparagine amide modification. Residues 87-100 constitute a propeptide that is removed on maturation; the sequence is SAEEQDLAEHLVTR. Position 118 is an asparagine amide (Asn-118). Positions 122–135 are excised as a propeptide; sequence SAEEQDLAEDLVTR. A Lysine amide modification is found at Lys-153. The propeptide occupies 157–170; sequence SAEDQDLAEDLVTR. Residue Asn-188 is modified to Asparagine amide. A propeptide spanning residues 192–205 is cleaved from the precursor; it reads SAEEQDLAEHLVTR. Asn-223 bears the Asparagine amide mark. The propeptide occupies 227 to 240; it reads SAEEQDLSEDLVTR. Asn-258 is subject to Asparagine amide. Positions 262-275 are excised as a propeptide; the sequence is SAEEQDLVEDLVTR. Lysine amide is present on Lys-293. Positions 297–305 are excised as a propeptide; it reads SAEQEKDMK.

This sequence belongs to the maximin-S family. Expressed by the skin dorsal glands.

The protein resides in the secreted. Maximin-S1 has no antimicrobial activity. Has no hemolytic activity. In terms of biological role, maximin-S2 has an activity against mycoplasma but has no activity against common Gram-positive and Gram-negative bacteria nor fungi. Has no hemolytic activity. Its function is as follows. Maximin-S3 has an activity against mycoplasma but has no activity against common Gram-positive and Gram-negative bacteria nor fungi. Has no hemolytic activity. Functionally, maximin-S4 has an activity against mycoplasma but has no activity against common Gram-positive and Gram-negative bacteria nor fungi. Has no hemolytic activity. Maximin-S5 has an activity against mycoplasma but has no activity against common Gram-positive and Gram-negative bacteria nor fungi. Has no hemolytic activity. In Bombina maxima (Giant fire-bellied toad), this protein is Maximins-S type B/C.